The following is a 355-amino-acid chain: MLERLENCEKRFIEIEEEISKPEVINDARLVRTLAQERADLQDKVEMYRRYKTMAKELEEAKNLLESEKDEDMRGMVRGEIENLEKSLTDLYEQMTFELLPKDPNDDKSIIMEIRAGTGGDEAGLFASDLYKMYIRYALLKNWKTEVIDINGNVAGIIKEVVFEVNGKGAFSRLKYERGVHRVQRVPQTEASGRIHTSTATVAVLPQVEEVDIDINMDEVRVDIFHSSGAGGQNVQKVATAIRLTHMPTGLVVCCQDERSQLKNKNKAFAVLRARLMELEQSKVDEERTESRRAQVGQADRSEKIRTYNFPQDRLTDHRIGLTAHNLPHILEGYLDEIIDTLATHEQTELLKGED.

The residue at position 233 (Gln-233) is an N5-methylglutamine.

Belongs to the prokaryotic/mitochondrial release factor family. Methylated by PrmC. Methylation increases the termination efficiency of RF1.

The protein localises to the cytoplasm. Functionally, peptide chain release factor 1 directs the termination of translation in response to the peptide chain termination codons UAG and UAA. The chain is Peptide chain release factor 1 from Dehalococcoides mccartyi (strain ATCC BAA-2100 / JCM 16839 / KCTC 5957 / BAV1).